Reading from the N-terminus, the 135-residue chain is Large ribosomal subunit protein mL54 (135 aa).

A mitochondrion-targeting transit peptide spans 1-14; the sequence is MAAAHLLRASRVWA.

The protein belongs to the mitochondrion-specific ribosomal protein mL54 family. As to quaternary structure, component of the mitochondrial ribosome large subunit (39S) which comprises a 16S rRNA and about 50 distinct proteins.

It is found in the mitochondrion. This is Large ribosomal subunit protein mL54 (Mrpl54) from Mus musculus (Mouse).